Here is a 566-residue protein sequence, read N- to C-terminus: NAD-dependent malic enzyme (566 aa).

Residue tyrosine 105 is the Proton donor of the active site. Residue arginine 158 participates in NAD(+) binding. The Proton acceptor role is filled by lysine 176. Residues glutamate 247, aspartate 248, and aspartate 271 each coordinate a divalent metal cation. NAD(+) contacts are provided by aspartate 271 and asparagine 419.

It belongs to the malic enzymes family. Homotetramer. Requires Mg(2+) as cofactor. The cofactor is Mn(2+).

It carries out the reaction (S)-malate + NAD(+) = pyruvate + CO2 + NADH. The enzyme catalyses oxaloacetate + H(+) = pyruvate + CO2. The chain is NAD-dependent malic enzyme from Acinetobacter baylyi (strain ATCC 33305 / BD413 / ADP1).